A 110-amino-acid polypeptide reads, in one-letter code: Cell division protein FtsB (110 aa).

Topologically, residues 1–3 (MRL) are cytoplasmic. Residues 4 to 21 (IILCLAALVLLIQFPLWL) form a helical membrane-spanning segment. At 22-110 (GKGGWLRVWD…PPKIEPKEKR (89 aa)) the chain is on the periplasmic side. A coiled-coil region spans residues 31–64 (DLDQQVIAAQKKNDELRARNAKLNSEVQDLKEGT).

Belongs to the FtsB family. In terms of assembly, part of a complex composed of FtsB, FtsL and FtsQ.

Its subcellular location is the cell inner membrane. In terms of biological role, essential cell division protein. May link together the upstream cell division proteins, which are predominantly cytoplasmic, with the downstream cell division proteins, which are predominantly periplasmic. This Herminiimonas arsenicoxydans protein is Cell division protein FtsB.